The following is a 178-amino-acid chain: Large ribosomal subunit protein uL6 (178 aa).

This sequence belongs to the universal ribosomal protein uL6 family. As to quaternary structure, part of the 50S ribosomal subunit.

This protein binds to the 23S rRNA, and is important in its secondary structure. It is located near the subunit interface in the base of the L7/L12 stalk, and near the tRNA binding site of the peptidyltransferase center. This Campylobacter lari (strain RM2100 / D67 / ATCC BAA-1060) protein is Large ribosomal subunit protein uL6.